The chain runs to 1046 residues: UDP-N-acetylglucosamine--peptide N-acetylglucosaminyltransferase 110 kDa subunit (1046 aa).

A2 bears the N-acetylalanine mark. 2 positions are modified to phosphoserine; by GSK3-beta; alternate: S3 and S4. S3 and S4 each carry an O-linked (GlcNAc) serine; alternate glycan. S20 bears the Phosphoserine mark. TPR repeat units lie at residues 21 to 54, 89 to 122, 123 to 156, 157 to 190, 191 to 224, 225 to 258, 259 to 292, 293 to 326, 327 to 360, 361 to 394, 395 to 428, and 429 to 462; these read FQGLAELAHREYQAGDFEAAERHCMQLWRQEPDN, AEAYSNLGNVYKERGQLQEAIEHYRHALRLKPDF, IDGYINLAAALVAAGDMEGAVQAYVSALQYNPDL, YCVRSDLGNLLKALGRLEEAKACYLKAIETQPNF, AVAWSNLGCVFNAQGEIWLAIHHFEKAVTLDPNF, LDAYINLGNVLKEARIFDRAVAAYLRALSLSPNH, AVVHGNLACVYYEQGLIDLAIDTYRRAIELQPHF, PDAYCNLANALKEKGSVAEAEDCYNTALRLCPTH, ADSLNNLANIKREQGNIEEAVRLYRKALEVFPEF, AAAHSNLASVLQQQGKLQEALMHYKEAIRISPTF, ADAYSNMGNTLKEMQDVQGALQCYTRAIQINPAF, and ADAHSNLASIHKDSGNIPEAIASYRTALKLKPDF. O-linked (GlcNAc) serine; by autocatalysis glycosylation is present at S399. T454 bears the Phosphothreonine mark. A TPR 13; truncated repeat occupies 463 to 473; the sequence is PDAYCNLAHCL. Residues 464–466 carry the DFP motif motif; the sequence is DAY. The Nuclear localization signal signature appears at 487–503; it reads KKLVSIVADQLEKNRLP. The active-site Proton acceptor is H508. UDP contacts are provided by residues Q849, K852, 906–908, 911–914, 930–932, and D935; these read APK, HVRR, and HTT. Y989 bears the Phosphotyrosine mark. Positions 991-1010 are required for phosphatidylinositol 3,4,5-triphosphate binding; the sequence is KKIRGKVWKQRISSPLFNTK.

The protein belongs to the glycosyltransferase 41 family. O-GlcNAc transferase subfamily. In terms of assembly, monomer; may exist in different oligomerization states in cells. Homotrimer, oligomerizes via TPR repeats 6 and 7. Trimerization is not necessary for activity in vitro, however it increases affinity for UDP-GlcNAc. Component of a THAP1/THAP3-HCFC1-OGT complex. Component of the NSL complex at least composed of MOF/KAT8, KANSL1, KANSL2, KANSL3, MCRS1, PHF20, OGT1/OGT, WDR5 and HCFC1. Found in a complex with KIF5B, RHOT1, RHOT2 and TRAK1. Found in a complex composed of at least SINHCAF, SIN3A, HDAC1, SAP30, RBBP4, OGT and TET1. Component of a complex composed of KMT2E/MLL5, OGT and USP7; the complex stabilizes KMT2E/MLL5, preventing KMT2E/MLL5 ubiquitination and proteasomal-mediated degradation. Interacts (via TPRs 1-6) with SIN3A; the interaction mediates transcriptional repression in parallel with histone deacetylase. Interacts (via TPR 5-6) with TET1, TET2 and TET3. Interacts (via TPR repeats 6 and 7) with ATXN10. Interacts with NSD2. Interacts with PROSER1; this interaction mediates TET2 O-GlcNAcylation and stability by promoting the interaction between OGT and TET2. In terms of processing, ubiquitinated by the SCF(FBXO31) complex, leading to its proteasomal degradation. Phosphorylation on Ser-3 or Ser-4 by GSK3-beta positively regulates its activity. Phosphorylation at Thr-454 by AMPK promotes nuclear localization. Post-translationally, glycosylated via autocatalysis; O-GlcNAcylation at Ser-399 promotes nuclear localization.

The protein resides in the nucleus. It is found in the cytoplasm. It catalyses the reaction L-seryl-[protein] + UDP-N-acetyl-alpha-D-glucosamine = 3-O-(N-acetyl-beta-D-glucosaminyl)-L-seryl-[protein] + UDP + H(+). The catalysed reaction is L-threonyl-[protein] + UDP-N-acetyl-alpha-D-glucosamine = 3-O-(N-acetyl-beta-D-glucosaminyl)-L-threonyl-[protein] + UDP + H(+). Its pathway is protein modification; protein glycosylation. With respect to regulation, subject to product inhibition by UDP. Its function is as follows. Catalyzes the transfer of a single N-acetylglucosamine from UDP-GlcNAc to a serine or threonine residue in cytoplasmic and nuclear proteins resulting in their modification with a beta-linked N-acetylglucosamine (O-GlcNAc). Glycosylates a large and diverse number of proteins including histone H2B, AKT1, AMPK, ATG4B, CAPRIN1, EZH2, FNIP1, GSDMD, KRT7, LMNA, LMNB1, LMNB2, RPTOR, HOXA1, PFKL, KMT2E/MLL5, MAPT/TAU, TET2, RBL2, RET, NOD2 and HCFC1. Can regulate their cellular processes via cross-talk between glycosylation and phosphorylation or by affecting proteolytic processing. Involved in insulin resistance in muscle and adipocyte cells via glycosylating insulin signaling components and inhibiting the 'Thr-308' phosphorylation of AKT1, enhancing IRS1 phosphorylation and attenuating insulin signaling. Involved in glycolysis regulation by mediating glycosylation of 6-phosphofructokinase PFKL, inhibiting its activity. Plays a key role in chromatin structure by mediating O-GlcNAcylation of 'Ser-112' of histone H2B: recruited to CpG-rich transcription start sites of active genes via its interaction with TET proteins (TET1, TET2 or TET3). As part of the NSL complex indirectly involved in acetylation of nucleosomal histone H4 on several lysine residues. O-GlcNAcylation of 'Ser-75' of EZH2 increases its stability, and facilitating the formation of H3K27me3 by the PRC2/EED-EZH2 complex. Stabilizes KMT2E/MLL5 by mediating its glycosylation, thereby preventing KMT2E/MLL5 ubiquitination. Regulates circadian oscillation of the clock genes and glucose homeostasis in the liver. Stabilizes clock proteins BMAL1 and CLOCK through O-glycosylation, which prevents their ubiquitination and subsequent degradation. Promotes the CLOCK-BMAL1-mediated transcription of genes in the negative loop of the circadian clock such as PER1/2 and CRY1/2. O-glycosylates HCFC1 and regulates its proteolytic processing and transcriptional activity. Component of a THAP1/THAP3-HCFC1-OGT complex that is required for the regulation of the transcriptional activity of RRM1. Regulates mitochondrial motility in neurons by mediating glycosylation of TRAK1. Promotes autophagy by mediating O-glycosylation of ATG4B. Acts as a regulator of mTORC1 signaling by mediating O-glycosylation of RPTOR and FNIP1: O-GlcNAcylation of RPTOR in response to glucose sufficiency promotes activation of the mTORC1 complex. The chain is UDP-N-acetylglucosamine--peptide N-acetylglucosaminyltransferase 110 kDa subunit (OGT) from Sus scrofa (Pig).